We begin with the raw amino-acid sequence, 686 residues long: Polyribonucleotide nucleotidyltransferase (686 aa).

Mg(2+)-binding residues include Asp478 and Asp484. A KH domain is found at 545-604 (PRVEVIQIPTDKIGLLIGPGGKTINALQDEYGVNISVENDGTVYVAGVEGMSVKAAVSAI). Positions 614-684 (GDIYVGKVVK…KQNRISLEMV (71 aa)) constitute an S1 motif domain.

It belongs to the polyribonucleotide nucleotidyltransferase family. Mg(2+) serves as cofactor.

The protein resides in the cytoplasm. The enzyme catalyses RNA(n+1) + phosphate = RNA(n) + a ribonucleoside 5'-diphosphate. Its function is as follows. Involved in mRNA degradation. Catalyzes the phosphorolysis of single-stranded polyribonucleotides processively in the 3'- to 5'-direction. This is Polyribonucleotide nucleotidyltransferase from Rubrobacter xylanophilus (strain DSM 9941 / JCM 11954 / NBRC 16129 / PRD-1).